The sequence spans 1076 residues: DNA-directed RNA polymerase subunit beta (1076 aa).

Belongs to the RNA polymerase beta chain family. In plastids the minimal PEP RNA polymerase catalytic core is composed of four subunits: alpha, beta, beta', and beta''. When a (nuclear-encoded) sigma factor is associated with the core the holoenzyme is formed, which can initiate transcription.

Its subcellular location is the plastid. The enzyme catalyses RNA(n) + a ribonucleoside 5'-triphosphate = RNA(n+1) + diphosphate. In terms of biological role, DNA-dependent RNA polymerase catalyzes the transcription of DNA into RNA using the four ribonucleoside triphosphates as substrates. The chain is DNA-directed RNA polymerase subunit beta from Euglena longa (Euglenophycean alga).